A 397-amino-acid polypeptide reads, in one-letter code: uncharacterized protein (397 aa).

[4Fe-4S] cluster-binding residues include Cys8, Cys14, Cys17, and Cys95. The S-adenosyl-L-methionine site is built by Gln229, Tyr258, Glu279, and Asp325. The active-site Nucleophile is the Cys352.

This sequence belongs to the class I-like SAM-binding methyltransferase superfamily. RNA M5U methyltransferase family.

This is an uncharacterized protein from Chlamydia muridarum (strain MoPn / Nigg).